We begin with the raw amino-acid sequence, 127 residues long: Glycine cleavage system H protein (127 aa).

The Lipoyl-binding domain maps to 24-106 (TATLGISAFA…YGEGWLVKVQ (83 aa)). At Lys65 the chain carries N6-lipoyllysine.

This sequence belongs to the GcvH family. As to quaternary structure, the glycine cleavage system is composed of four proteins: P, T, L and H. The cofactor is (R)-lipoate.

In terms of biological role, the glycine cleavage system catalyzes the degradation of glycine. The H protein shuttles the methylamine group of glycine from the P protein to the T protein. This Thermosynechococcus vestitus (strain NIES-2133 / IAM M-273 / BP-1) protein is Glycine cleavage system H protein.